The following is a 334-amino-acid chain: Small ribosomal subunit protein uS2 (334 aa).

It belongs to the universal ribosomal protein uS2 family.

The sequence is that of Small ribosomal subunit protein uS2 from Xanthobacter autotrophicus (strain ATCC BAA-1158 / Py2).